The chain runs to 135 residues: C-type natriuretic peptide (135 aa).

Positions 1–25 (MSGHTSFYCGLLLLLLIQVQARPRA) are cleaved as a signal peptide. Positions 26–113 (DDSLQVLSRL…PLRFKGRSKK (88 aa)) are excised as a propeptide. A disordered region spans residues 46–67 (EELNNEAQEISPAASLPDLNTD). The cysteines at positions 119 and 135 are disulfide-linked.

It belongs to the natriuretic peptide family.

The protein resides in the secreted. In terms of biological role, hormone which may be vasoactive and natriuretic. Has a cGMP-stimulating activity. The sequence is that of C-type natriuretic peptide from Squalus acanthias (Spiny dogfish).